A 290-amino-acid polypeptide reads, in one-letter code: Probable septum site-determining protein MinC (290 aa).

It belongs to the MinC family. In terms of assembly, interacts with MinD and FtsZ.

Cell division inhibitor that blocks the formation of polar Z ring septums. Rapidly oscillates between the poles of the cell to destabilize FtsZ filaments that have formed before they mature into polar Z rings. Prevents FtsZ polymerization. This Heliobacterium modesticaldum (strain ATCC 51547 / Ice1) protein is Probable septum site-determining protein MinC.